Here is a 557-residue protein sequence, read N- to C-terminus: Alpha-glucosidase (557 aa).

Aspartate 201 acts as the Nucleophile in catalysis. Catalysis depends on glutamate 256, which acts as the Proton donor.

Belongs to the glycosyl hydrolase 13 family.

It carries out the reaction Hydrolysis of terminal, non-reducing (1-&gt;4)-linked alpha-D-glucose residues with release of alpha-D-glucose.. The chain is Alpha-glucosidase (agl) from Pediococcus pentosaceus.